A 406-amino-acid polypeptide reads, in one-letter code: Elongation factor Tu, chloroplastic (406 aa).

A tr-type G domain is found at 8-210 (KTHINIATIG…LLDSYIPKPK (203 aa)). GTP is bound by residues 17 to 24 (GHFNHGKT), 77 to 81 (DCPGH), and 132 to 135 (NKED). Residue Thr-24 coordinates Mg(2+).

This sequence belongs to the TRAFAC class translation factor GTPase superfamily. Classic translation factor GTPase family. EF-Tu/EF-1A subfamily. Monomer.

The protein resides in the plastid. Its subcellular location is the chloroplast. It catalyses the reaction GTP + H2O = GDP + phosphate + H(+). GTP hydrolase that promotes the GTP-dependent binding of aminoacyl-tRNA to the A-site of ribosomes during protein biosynthesis. This Chaetosphaeridium globosum (Charophycean green alga) protein is Elongation factor Tu, chloroplastic (tufA).